The primary structure comprises 521 residues: Putative FNIP repeat-containing protein L162 (521 aa).

2 FNIP repeats span residues 179 to 221 (FNKS…LGYK) and 222 to 263 (YNYP…MGGR).

This is Putative FNIP repeat-containing protein L162 from Acanthamoeba polyphaga mimivirus (APMV).